The primary structure comprises 1135 residues: WASH complex subunit 4 (1135 aa).

N-acetylalanine is present on A2.

Belongs to the SWIP family. Probable component of the WASH complex.

The sequence is that of WASH complex subunit 4 from Dictyostelium discoideum (Social amoeba).